The primary structure comprises 725 residues: Putative oligopeptide transporter YGL114W (725 aa).

A run of 9 helical transmembrane segments spans residues 28–48 (ATIA…QFGL), 134–154 (FREL…FAVP), 254–274 (IIIL…SYFV), 353–373 (WILW…FIVV), 449–469 (ISGC…LFGI), 472–492 (IPLY…ILGI), 564–584 (FCAQ…MYLC), 644–664 (YGYG…GIFN), and 697–717 (IVFS…NMLF).

This sequence belongs to the oligopeptide OPT transporter family.

It is found in the membrane. This is Putative oligopeptide transporter YGL114W from Saccharomyces cerevisiae (strain ATCC 204508 / S288c) (Baker's yeast).